Here is a 267-residue protein sequence, read N- to C-terminus: MRILVEIAYQGNNFLGFQIQQNGRTVQQQFEKLLQRMHKRHVRIHPSSRTDRGVHAIQQYFHFDTELNIPMSQWQYAMNRTLPDDIYVNNVVTVDDDFHCRYDCVGKRYRYKVYQAQHRDPFQSGLKTFIPETLDLDKMNRAAQQFIGTHDFTGFCSQKTEVESKVRTLYQSEIVKTDDGFDYIVTGSGFLYNMVRVLVAFLIEVGKGRHEISDVPKLLESKNRKNVPFTATAEGLYLEKIYLDENELLKDFGNDIKIHRKKSLQND.

Asp-51 functions as the Nucleophile in the catalytic mechanism. Position 109 (Tyr-109) interacts with substrate.

Belongs to the tRNA pseudouridine synthase TruA family. As to quaternary structure, homodimer.

The catalysed reaction is uridine(38/39/40) in tRNA = pseudouridine(38/39/40) in tRNA. In terms of biological role, formation of pseudouridine at positions 38, 39 and 40 in the anticodon stem and loop of transfer RNAs. This is tRNA pseudouridine synthase A from Staphylococcus aureus (strain MSSA476).